Reading from the N-terminus, the 1187-residue chain is DNA-directed RNA polymerase subunit beta (1187 aa).

Residues Lys1150 to Gln1187 form a disordered region. The span at Ala1173 to Gln1187 shows a compositional bias: basic and acidic residues.

Belongs to the RNA polymerase beta chain family. As to quaternary structure, the RNAP catalytic core consists of 2 alpha, 1 beta, 1 beta' and 1 omega subunit. When a sigma factor is associated with the core the holoenzyme is formed, which can initiate transcription.

It catalyses the reaction RNA(n) + a ribonucleoside 5'-triphosphate = RNA(n+1) + diphosphate. DNA-dependent RNA polymerase catalyzes the transcription of DNA into RNA using the four ribonucleoside triphosphates as substrates. In Bifidobacterium longum subsp. infantis (strain ATCC 15697 / DSM 20088 / JCM 1222 / NCTC 11817 / S12), this protein is DNA-directed RNA polymerase subunit beta.